We begin with the raw amino-acid sequence, 371 residues long: DNA replication and repair protein RecF (371 aa).

30–37 (GKNGQGKT) lines the ATP pocket.

It belongs to the RecF family.

Its subcellular location is the cytoplasm. Functionally, the RecF protein is involved in DNA metabolism; it is required for DNA replication and normal SOS inducibility. RecF binds preferentially to single-stranded, linear DNA. It also seems to bind ATP. This Clostridioides difficile (strain 630) (Peptoclostridium difficile) protein is DNA replication and repair protein RecF.